A 229-amino-acid chain; its full sequence is Enolase-phosphatase E1 (229 aa).

Belongs to the HAD-like hydrolase superfamily. MasA/MtnC family. Monomer. Mg(2+) is required as a cofactor.

The enzyme catalyses 5-methylsulfanyl-2,3-dioxopentyl phosphate + H2O = 1,2-dihydroxy-5-(methylsulfanyl)pent-1-en-3-one + phosphate. Its pathway is amino-acid biosynthesis; L-methionine biosynthesis via salvage pathway; L-methionine from S-methyl-5-thio-alpha-D-ribose 1-phosphate: step 3/6. The protein operates within amino-acid biosynthesis; L-methionine biosynthesis via salvage pathway; L-methionine from S-methyl-5-thio-alpha-D-ribose 1-phosphate: step 4/6. In terms of biological role, bifunctional enzyme that catalyzes the enolization of 2,3-diketo-5-methylthiopentyl-1-phosphate (DK-MTP-1-P) into the intermediate 2-hydroxy-3-keto-5-methylthiopentenyl-1-phosphate (HK-MTPenyl-1-P), which is then dephosphorylated to form the acireductone 1,2-dihydroxy-3-keto-5-methylthiopentene (DHK-MTPene). The protein is Enolase-phosphatase E1 of Yersinia pestis (strain Pestoides F).